The following is a 187-amino-acid chain: Transmembrane protein 11-B, mitochondrial (187 aa).

The next 2 membrane-spanning stretches (helical) occupy residues 79 to 95 (TAVL…LALP) and 102 to 119 (VSLP…LYGI).

It belongs to the TMEM11 family.

The protein localises to the mitochondrion inner membrane. Its function is as follows. Plays a role in mitochondrial morphogenesis. This Xenopus laevis (African clawed frog) protein is Transmembrane protein 11-B, mitochondrial (tmem11-b).